Reading from the N-terminus, the 65-residue chain is Conotoxin Lt5.1 (65 aa).

The signal sequence occupies residues 1–19 (MRCLPVFIILLLLIPSAPS). The propeptide occupies 20 to 48 (VDAQRKTKDDVPLASFHDNAKRTLKRLWN).

It belongs to the conotoxin T superfamily. Contains 2 disulfide bonds that can be either 'C1-C3, C2-C4' or 'C1-C4, C2-C3', since these disulfide connectivities have been observed for conotoxins with cysteine framework V (for examples, see AC P0DQQ7 and AC P81755). Expressed by the venom duct.

The protein localises to the secreted. The sequence is that of Conotoxin Lt5.1 from Conus litteratus (Lettered cone).